Here is a 60-residue protein sequence, read N- to C-terminus: Large ribosomal subunit protein bL32 (60 aa).

It belongs to the bacterial ribosomal protein bL32 family.

The polypeptide is Large ribosomal subunit protein bL32 (Streptococcus sanguinis (strain SK36)).